We begin with the raw amino-acid sequence, 90 residues long: Probable Fe(2+)-trafficking protein (90 aa).

Belongs to the Fe(2+)-trafficking protein family.

Could be a mediator in iron transactions between iron acquisition and iron-requiring processes, such as synthesis and/or repair of Fe-S clusters in biosynthetic enzymes. In Pseudoalteromonas atlantica (strain T6c / ATCC BAA-1087), this protein is Probable Fe(2+)-trafficking protein.